Consider the following 69-residue polypeptide: NAD(P)H-quinone oxidoreductase subunit O (69 aa).

It belongs to the complex I NdhO subunit family. NDH-1 can be composed of about 15 different subunits; different subcomplexes with different compositions have been identified which probably have different functions.

It localises to the cellular thylakoid membrane. The enzyme catalyses a plastoquinone + NADH + (n+1) H(+)(in) = a plastoquinol + NAD(+) + n H(+)(out). It carries out the reaction a plastoquinone + NADPH + (n+1) H(+)(in) = a plastoquinol + NADP(+) + n H(+)(out). Functionally, NDH-1 shuttles electrons from an unknown electron donor, via FMN and iron-sulfur (Fe-S) centers, to quinones in the respiratory and/or the photosynthetic chain. The immediate electron acceptor for the enzyme in this species is believed to be plastoquinone. Couples the redox reaction to proton translocation, and thus conserves the redox energy in a proton gradient. Cyanobacterial NDH-1 also plays a role in inorganic carbon-concentration. The sequence is that of NAD(P)H-quinone oxidoreductase subunit O from Acaryochloris marina (strain MBIC 11017).